We begin with the raw amino-acid sequence, 517 residues long: GMP synthase [glutamine-hydrolyzing] (517 aa).

The Glutamine amidotransferase type-1 domain occupies 9 to 199 (RILILDFGSQ…VLGVCGCERL (191 aa)). The Nucleophile role is filled by cysteine 86. Catalysis depends on residues histidine 173 and glutamate 175. Positions 200–392 (WTSESIIEDA…LGLPYNMLYR (193 aa)) constitute a GMPS ATP-PPase domain. An ATP-binding site is contributed by 227 to 233 (SGGVDSS).

As to quaternary structure, homodimer.

It carries out the reaction XMP + L-glutamine + ATP + H2O = GMP + L-glutamate + AMP + diphosphate + 2 H(+). It participates in purine metabolism; GMP biosynthesis; GMP from XMP (L-Gln route): step 1/1. Its function is as follows. Catalyzes the synthesis of GMP from XMP. The protein is GMP synthase [glutamine-hydrolyzing] of Vibrio parahaemolyticus serotype O3:K6 (strain RIMD 2210633).